Reading from the N-terminus, the 148-residue chain is Large ribosomal subunit protein bL9 (148 aa).

Belongs to the bacterial ribosomal protein bL9 family.

Its function is as follows. Binds to the 23S rRNA. This chain is Large ribosomal subunit protein bL9, found in Staphylococcus aureus (strain bovine RF122 / ET3-1).